Reading from the N-terminus, the 122-residue chain is Large ribosomal subunit protein uL14 (122 aa).

Belongs to the universal ribosomal protein uL14 family. Part of the 50S ribosomal subunit. Forms a cluster with proteins L3 and L19. In the 70S ribosome, L14 and L19 interact and together make contacts with the 16S rRNA in bridges B5 and B8.

In terms of biological role, binds to 23S rRNA. Forms part of two intersubunit bridges in the 70S ribosome. The protein is Large ribosomal subunit protein uL14 of Psychrobacter sp. (strain PRwf-1).